The following is a 287-amino-acid chain: Elongation factor Ts (287 aa).

The segment at 81 to 84 (TDFV) is involved in Mg(2+) ion dislocation from EF-Tu.

It belongs to the EF-Ts family.

It localises to the cytoplasm. Associates with the EF-Tu.GDP complex and induces the exchange of GDP to GTP. It remains bound to the aminoacyl-tRNA.EF-Tu.GTP complex up to the GTP hydrolysis stage on the ribosome. This is Elongation factor Ts from Nitratidesulfovibrio vulgaris (strain ATCC 29579 / DSM 644 / CCUG 34227 / NCIMB 8303 / VKM B-1760 / Hildenborough) (Desulfovibrio vulgaris).